The following is a 613-amino-acid chain: ATP-dependent zinc metalloprotease FtsH (613 aa).

Topologically, residues 1–4 (MVKN) are cytoplasmic. Residues 5 to 25 (LIFWLVITVVLMSVFQNFNSS) traverse the membrane as a helical segment. Topologically, residues 26 to 98 (DTSNHRVDYS…VGEIPEEPSL (73 aa)) are extracellular. The helical transmembrane segment at 99–119 (LISIFISWFPMLLLIGVWIFF) threads the bilayer. At 120-613 (MRQMQMGGGK…WLEVDQKKDI (494 aa)) the chain is on the cytoplasmic side. 192–199 (GPPGTGKT) is a binding site for ATP. His414 lines the Zn(2+) pocket. Residue Glu415 is part of the active site. Residues His418 and Asp492 each contribute to the Zn(2+) site.

This sequence in the central section; belongs to the AAA ATPase family. The protein in the C-terminal section; belongs to the peptidase M41 family. In terms of assembly, homohexamer. It depends on Zn(2+) as a cofactor.

It localises to the cell membrane. Functionally, acts as a processive, ATP-dependent zinc metallopeptidase for both cytoplasmic and membrane proteins. Plays a role in the quality control of integral membrane proteins. This Buchnera aphidicola subsp. Schizaphis graminum (strain Sg) protein is ATP-dependent zinc metalloprotease FtsH.